A 466-amino-acid polypeptide reads, in one-letter code: 3-isopropylmalate dehydratase large subunit (466 aa).

Residues Cys-347, Cys-407, and Cys-410 each coordinate [4Fe-4S] cluster.

It belongs to the aconitase/IPM isomerase family. LeuC type 1 subfamily. Heterodimer of LeuC and LeuD. [4Fe-4S] cluster serves as cofactor.

The enzyme catalyses (2R,3S)-3-isopropylmalate = (2S)-2-isopropylmalate. It participates in amino-acid biosynthesis; L-leucine biosynthesis; L-leucine from 3-methyl-2-oxobutanoate: step 2/4. In terms of biological role, catalyzes the isomerization between 2-isopropylmalate and 3-isopropylmalate, via the formation of 2-isopropylmaleate. The polypeptide is 3-isopropylmalate dehydratase large subunit (Klebsiella pneumoniae subsp. pneumoniae (strain ATCC 700721 / MGH 78578)).